Reading from the N-terminus, the 129-residue chain is Small ribosomal subunit protein uS11 (129 aa).

It belongs to the universal ribosomal protein uS11 family. In terms of assembly, part of the 30S ribosomal subunit. Interacts with proteins S7 and S18. Binds to IF-3.

Functionally, located on the platform of the 30S subunit, it bridges several disparate RNA helices of the 16S rRNA. Forms part of the Shine-Dalgarno cleft in the 70S ribosome. The polypeptide is Small ribosomal subunit protein uS11 (Pseudomonas fluorescens (strain ATCC BAA-477 / NRRL B-23932 / Pf-5)).